The sequence spans 197 residues: Potassium-transporting ATPase KdpC subunit (197 aa).

Residues 9–29 (LVVTLLLAALLCGAYPVLVTG) traverse the membrane as a helical segment.

The protein belongs to the KdpC family. The system is composed of three essential subunits: KdpA, KdpB and KdpC.

The protein localises to the cell inner membrane. In terms of biological role, part of the high-affinity ATP-driven potassium transport (or Kdp) system, which catalyzes the hydrolysis of ATP coupled with the electrogenic transport of potassium into the cytoplasm. This subunit acts as a catalytic chaperone that increases the ATP-binding affinity of the ATP-hydrolyzing subunit KdpB by the formation of a transient KdpB/KdpC/ATP ternary complex. The polypeptide is Potassium-transporting ATPase KdpC subunit (Nitratidesulfovibrio vulgaris (strain DSM 19637 / Miyazaki F) (Desulfovibrio vulgaris)).